We begin with the raw amino-acid sequence, 336 residues long: Glyceraldehyde-3-phosphate dehydrogenase (336 aa).

NAD(+) is bound by residues Arg12–Ile13, Asp34, and Arg79. Residues Ser150–Thr152, Thr181, Thr210–Gly211, and Arg233 each bind D-glyceraldehyde 3-phosphate. Cys151 (nucleophile) is an active-site residue. Asn315 contacts NAD(+).

The protein belongs to the glyceraldehyde-3-phosphate dehydrogenase family. As to quaternary structure, homotetramer.

The protein localises to the cytoplasm. The enzyme catalyses D-glyceraldehyde 3-phosphate + phosphate + NAD(+) = (2R)-3-phospho-glyceroyl phosphate + NADH + H(+). The protein operates within carbohydrate degradation; glycolysis; pyruvate from D-glyceraldehyde 3-phosphate: step 1/5. The sequence is that of Glyceraldehyde-3-phosphate dehydrogenase (gpdA) from Aspergillus niger.